The primary structure comprises 808 residues: Probable mannosyl-oligosaccharide glucosidase (808 aa).

The Cytoplasmic segment spans residues Met1–Arg11. Residues Trp12 to Val31 traverse the membrane as a helical; Signal-anchor for type II membrane protein segment. At Glu32–Tyr808 the chain is on the lumenal side. N-linked (GlcNAc...) asparagine glycosylation occurs at Asn39. Asp580 acts as the Proton donor in catalysis. Residue Glu778 is the Proton acceptor of the active site.

It belongs to the glycosyl hydrolase 63 family.

The protein localises to the endoplasmic reticulum membrane. The catalysed reaction is N(4)-(alpha-D-Glc-(1-&gt;2)-alpha-D-Glc-(1-&gt;3)-alpha-D-Glc-(1-&gt;3)-alpha-D-Man-(1-&gt;2)-alpha-D-Man-(1-&gt;2)-alpha-D-Man-(1-&gt;3)-[alpha-D-Man-(1-&gt;2)-alpha-D-Man-(1-&gt;3)-[alpha-D-Man-(1-&gt;2)-alpha-D-Man-(1-&gt;6)]-alpha-D-Man-(1-&gt;6)]-beta-D-Man-(1-&gt;4)-beta-D-GlcNAc-(1-&gt;4)-beta-D-GlcNAc)-L-asparaginyl-[protein] + H2O = N(4)-(alpha-D-Glc-(1-&gt;3)-alpha-D-Glc-(1-&gt;3)-alpha-D-Man-(1-&gt;2)-alpha-D-Man-(1-&gt;2)-alpha-D-Man-(1-&gt;3)-[alpha-D-Man-(1-&gt;2)-alpha-D-Man-(1-&gt;3)-[alpha-D-Man-(1-&gt;2)-alpha-D-Man-(1-&gt;6)]-alpha-D-Man-(1-&gt;6)]-beta-D-Man-(1-&gt;4)-beta-D-GlcNAc-(1-&gt;4)-beta-D-GlcNAc)-L-asparaginyl-[protein] + beta-D-glucose. Functionally, cleaves the distal alpha 1,2-linked glucose residue from the Glc(3)Man(9)GlcNAc(2) oligosaccharide precursor highly specifically. The polypeptide is Probable mannosyl-oligosaccharide glucosidase (Schizosaccharomyces pombe (strain 972 / ATCC 24843) (Fission yeast)).